The chain runs to 152 residues: Large ribosomal subunit protein uL22 (152 aa).

This sequence belongs to the universal ribosomal protein uL22 family. As to quaternary structure, part of the 50S ribosomal subunit.

This protein binds specifically to 23S rRNA. It makes multiple contacts with different domains of the 23S rRNA in the assembled 50S subunit and ribosome. Functionally, the globular domain of the protein is located near the polypeptide exit tunnel on the outside of the subunit, while an extended beta-hairpin is found that lines the wall of the exit tunnel in the center of the 70S ribosome. In Methanothrix thermoacetophila (strain DSM 6194 / JCM 14653 / NBRC 101360 / PT) (Methanosaeta thermophila), this protein is Large ribosomal subunit protein uL22.